A 206-amino-acid chain; its full sequence is Ribosomal RNA large subunit methyltransferase E (206 aa).

S-adenosyl-L-methionine contacts are provided by Gly-60, Trp-62, Asp-80, Asp-96, and Asp-121. The Proton acceptor role is filled by Lys-161.

The protein belongs to the class I-like SAM-binding methyltransferase superfamily. RNA methyltransferase RlmE family.

The protein localises to the cytoplasm. It carries out the reaction uridine(2552) in 23S rRNA + S-adenosyl-L-methionine = 2'-O-methyluridine(2552) in 23S rRNA + S-adenosyl-L-homocysteine + H(+). In terms of biological role, specifically methylates the uridine in position 2552 of 23S rRNA at the 2'-O position of the ribose in the fully assembled 50S ribosomal subunit. This Legionella pneumophila (strain Paris) protein is Ribosomal RNA large subunit methyltransferase E.